Consider the following 520-residue polypeptide: U3 small nucleolar RNA-associated protein 15 homolog (520 aa).

7 WD repeats span residues 36–75 (KEFGAINKIDFSPVPPYNYAVTASSRVHIYGRYSQEPIKT), 78–117 (RFKDAAYCATYRDDGKLLVAGSEEGSIRLFDISGRAPLRQ), 120–159 (GHTKAVHVVGFLSDKYRIFSGGDDYSSSLWDIPSATEIVS), 162–202 (EHSD…SVMT), 204–242 (EHGHPVESVLLFPSGGLLVSAGGRYVKVWDVLKGGQLLV), 246–285 (NHHKTVTCLCLNSSGQRLLSGSLDRHVKIYSTTSYKVVHS), and 287–326 (NYATSILSLALSPEDETIIVGMTNGVLNVKHRKPEESKEK).

Part of the small subunit (SSU) processome, composed of more than 70 proteins and the RNA chaperone small nucleolar RNA (snoRNA) U3. May be a component of the proposed t-UTP subcomplex of the ribosomal small subunit (SSU) processome.

Its subcellular location is the nucleus. It is found in the nucleolus. Its function is as follows. Ribosome biogenesis factor. Involved in nucleolar processing of pre-18S ribosomal RNA. Required for optimal pre-ribosomal RNA transcription by RNA polymerase I. Part of the small subunit (SSU) processome, first precursor of the small eukaryotic ribosomal subunit. During the assembly of the SSU processome in the nucleolus, many ribosome biogenesis factors, an RNA chaperone and ribosomal proteins associate with the nascent pre-rRNA and work in concert to generate RNA folding, modifications, rearrangements and cleavage as well as targeted degradation of pre-ribosomal RNA by the RNA exosome. In Gallus gallus (Chicken), this protein is U3 small nucleolar RNA-associated protein 15 homolog (UTP15).